Reading from the N-terminus, the 296-residue chain is Phosphatidylserine decarboxylase proenzyme (296 aa).

Catalysis depends on charge relay system; for autoendoproteolytic cleavage activity residues Asp-113, His-169, and Ser-256. Ser-256 functions as the Schiff-base intermediate with substrate; via pyruvic acid; for decarboxylase activity in the catalytic mechanism. The residue at position 256 (Ser-256) is a Pyruvic acid (Ser); by autocatalysis.

This sequence belongs to the phosphatidylserine decarboxylase family. PSD-B subfamily. Prokaryotic type II sub-subfamily. As to quaternary structure, heterodimer of a large membrane-associated beta subunit and a small pyruvoyl-containing alpha subunit. It depends on pyruvate as a cofactor. Is synthesized initially as an inactive proenzyme. Formation of the active enzyme involves a self-maturation process in which the active site pyruvoyl group is generated from an internal serine residue via an autocatalytic post-translational modification. Two non-identical subunits are generated from the proenzyme in this reaction, and the pyruvate is formed at the N-terminus of the alpha chain, which is derived from the carboxyl end of the proenzyme. The autoendoproteolytic cleavage occurs by a canonical serine protease mechanism, in which the side chain hydroxyl group of the serine supplies its oxygen atom to form the C-terminus of the beta chain, while the remainder of the serine residue undergoes an oxidative deamination to produce ammonia and the pyruvoyl prosthetic group on the alpha chain. During this reaction, the Ser that is part of the protease active site of the proenzyme becomes the pyruvoyl prosthetic group, which constitutes an essential element of the active site of the mature decarboxylase.

The protein resides in the cell membrane. The enzyme catalyses a 1,2-diacyl-sn-glycero-3-phospho-L-serine + H(+) = a 1,2-diacyl-sn-glycero-3-phosphoethanolamine + CO2. It participates in phospholipid metabolism; phosphatidylethanolamine biosynthesis; phosphatidylethanolamine from CDP-diacylglycerol: step 2/2. Catalyzes the formation of phosphatidylethanolamine (PtdEtn) from phosphatidylserine (PtdSer). The sequence is that of Phosphatidylserine decarboxylase proenzyme from Clostridium botulinum (strain Eklund 17B / Type B).